The sequence spans 317 residues: Tumor-associated calcium signal transducer 2 (317 aa).

Positions 1–24 (MARGLDLAPLLLLLLAMATRFCTA) are cleaved as a signal peptide. At 25 to 270 (QSNCTCPTNK…QFSMKRLTAG (246 aa)) the chain is on the extracellular side. Asparagine 27 is a glycosylation site (N-linked (GlcNAc...) asparagine). Residues 64 to 139 (TSKCLLLKAR…TDKGDQSLRC (76 aa)) enclose the Thyroglobulin type-1 domain. 3 cysteine pairs are disulfide-bonded: cysteine 67–cysteine 102, cysteine 113–cysteine 119, and cysteine 121–cysteine 139. An N-linked (GlcNAc...) asparagine glycan is attached at asparagine 114. 2 N-linked (GlcNAc...) asparagine glycosylation sites follow: asparagine 162 and asparagine 202. Residues 271-291 (VIAVIAVVSVAVVAGVVVLVV) traverse the membrane as a helical segment. The Cytoplasmic portion of the chain corresponds to 292–317 (TKRRKSGKYKKVELKELGEMRSEPSL).

Belongs to the EPCAM family. As to expression, expressed in kidney, lung, ovary and testis. High levels of expression in immortalized keratinocytes.

The protein localises to the membrane. Functionally, may function as a growth factor receptor. The sequence is that of Tumor-associated calcium signal transducer 2 (Tacstd2) from Mus musculus (Mouse).